A 187-amino-acid chain; its full sequence is MSLFKDDIQLNEHQVAWYSKDWTAVQSAADSFKEKAENEFFEIIGAINNKTKCSIAQKDYSKFMVENALSQFPECMPAVYAMNLIGSGLSDEAHFNYLMAAVPRGKRYGKWAKLVEDSTEVLIIKLLAKRYQVNTNDAINYKSILTKNGKLPLVLKELKGLVTDDFLKEVTKNVKEQKQLKKLALEW.

It belongs to the Tevenvirinae sliding-clamp-loader small subunit family. The sliding-clamp-loader consists of 4 large subunits and 1 small subunit. Interacts with the sliding clamp; this interaction allows the sliding-clamp-loader to open the sliding clamp. Part of the replicase complex that includes the DNA polymerase, the polymerase clamp, the clamp loader complex, the single-stranded DNA binding protein, the primase, the helicase and the helicase assembly factor.

Its function is as follows. Forms the sliding-clamp-loader together with the small subunit. The clamp loader holds the clamp in an open conformation and places it onto the DNA. In Escherichia coli (Bacteriophage T4), this protein is Sliding-clamp-loader small subunit (62).